A 157-amino-acid chain; its full sequence is Endosomal/vacuolar adapter protein YPT35 (157 aa).

Residues Ile43–Asn157 enclose the PX domain.

It belongs to the YPT35 family.

The protein resides in the endosome membrane. The protein localises to the vacuole membrane. Its function is as follows. Recruits the lipid transfer protein VPS13 to endosomal and vacuolar membranes. In Debaryomyces hansenii (strain ATCC 36239 / CBS 767 / BCRC 21394 / JCM 1990 / NBRC 0083 / IGC 2968) (Yeast), this protein is Endosomal/vacuolar adapter protein YPT35 (YPT35).